The sequence spans 218 residues: GTP cyclohydrolase 1 (218 aa).

Residues Cys-109, His-112, and Cys-180 each contribute to the Zn(2+) site.

Belongs to the GTP cyclohydrolase I family. In terms of assembly, toroid-shaped homodecamer, composed of two pentamers of five dimers.

The enzyme catalyses GTP + H2O = 7,8-dihydroneopterin 3'-triphosphate + formate + H(+). Its pathway is cofactor biosynthesis; 7,8-dihydroneopterin triphosphate biosynthesis; 7,8-dihydroneopterin triphosphate from GTP: step 1/1. The protein is GTP cyclohydrolase 1 (folE) of Pasteurella multocida (strain Pm70).